A 338-amino-acid chain; its full sequence is Malate dehydrogenase, mitochondrial (338 aa).

Residues Met1–Asn24 constitute a mitochondrion transit peptide. NAD(+)-binding positions include Gly31–Gly37 and Asp57. O-linked (GalNAc...) serine glycosylation is present at Ser33. 2 positions are modified to N6-acetyllysine; alternate: Lys78 and Lys91. An N6-succinyllysine; alternate mark is found at Lys78 and Lys91. Substrate contacts are provided by Arg104 and Arg110. NAD(+) contacts are provided by residues Asn117 and Ile140–Asn142. A substrate-binding site is contributed by Asn142. Position 165 is an N6-acetyllysine (Lys165). Asp173 (proton relay) is an active-site residue. Residue Arg176 participates in substrate binding. Lys185 is subject to N6-acetyllysine; alternate. Lys185 carries the N6-succinyllysine; alternate modification. His200 functions as the Proton acceptor in the catalytic mechanism. Residue Lys203 is modified to N6-succinyllysine. N6-acetyllysine; alternate is present on residues Lys215 and Lys239. An N6-succinyllysine; alternate mark is found at Lys215 and Lys239. Lys239 carries the N6-malonyllysine; alternate modification. At Ser246 the chain carries Phosphoserine. Residue Met251 coordinates NAD(+). Lys269 carries the post-translational modification N6-succinyllysine. An N6-acetyllysine; alternate mark is found at Lys296, Lys301, Lys307, Lys314, and Lys324. Residues Lys296, Lys301, Lys307, Lys314, and Lys324 each carry the N6-succinyllysine; alternate modification. Position 307 is an N6-malonyllysine; alternate (Lys307). Phosphoserine is present on Ser326. N6-acetyllysine; alternate is present on residues Lys328, Lys329, and Lys335. The residue at position 328 (Lys328) is an N6-succinyllysine; alternate. Lys329 is modified (N6-malonyllysine; alternate). Lys335 is modified (N6-succinyllysine; alternate).

This sequence belongs to the LDH/MDH superfamily. MDH type 1 family. In terms of assembly, homodimer. In terms of processing, acetylation is enhanced after treatment either with trichostin A (TSA) or with nicotinamide (NAM) with the appearance of tri- and tetraacetylations. Glucose also increases acetylation. In terms of tissue distribution, ubiquitously expressed. Highly expressed in skeletal muscle and heart. Also expressed in liver, ileum, colon, kidney and adipose tissue, and at very low levels in lung, pancreas, stomach and spleen.

It is found in the mitochondrion matrix. The enzyme catalyses (S)-malate + NAD(+) = oxaloacetate + NADH + H(+). With respect to regulation, enzyme activity is enhanced by acetylation. This chain is Malate dehydrogenase, mitochondrial, found in Felis catus (Cat).